A 407-amino-acid chain; its full sequence is Protein COS9 (407 aa).

Helical transmembrane passes span 75-95, 98-118, and 261-281; these read TWLLLLLLMWLPGFLSQIKSI, IFPFKLCILVSCLVGIFLPNI, and IFNLWLFPAFILFLACIYVSW.

It belongs to the DUP/COS family.

It is found in the membrane. The protein is Protein COS9 (COS9) of Saccharomyces cerevisiae (strain ATCC 204508 / S288c) (Baker's yeast).